The sequence spans 312 residues: Dipeptide transport ATP-binding protein DppF (312 aa).

Residues 10–255 (IKNLDLTFNK…PIHPYTKSLL (246 aa)) enclose the ABC transporter domain. 45–52 (GESGSGKT) provides a ligand contact to ATP.

This sequence belongs to the ABC transporter superfamily. As to quaternary structure, the complex is composed of two ATP-binding proteins (DppD and DppF), two transmembrane proteins (DppB and DppC) and a solute-binding protein (DppA).

It is found in the cell membrane. It carries out the reaction a dipeptide(out) + ATP + H2O = a dipeptide(in) + ADP + phosphate + H(+). Part of the ABC transporter DppABCDF involved in dipeptide transport. Responsible for energy coupling to the transport system. The protein is Dipeptide transport ATP-binding protein DppF of Lactococcus lactis subsp. cremoris (strain MG1363).